Reading from the N-terminus, the 121-residue chain is Large ribosomal subunit protein eL31 (121 aa).

It belongs to the eukaryotic ribosomal protein eL31 family.

This Perilla frutescens (Beefsteak mint) protein is Large ribosomal subunit protein eL31 (RPL31).